Here is a 332-residue protein sequence, read N- to C-terminus: MGIYMSQIVVCAMYKFVTLEDFEAMRQPLLDTMIKNNVKGTLLLANEGINGTVAGTRESIDNLLAYLKADPRLVDIDYKESYHQEMPFYRSKVKLKKEIVTLGIDEIDPNKICGKYVEPKDWNDLISDPETVLIDTRNEYEIEIGTFKNAINPHTENFREFPQYVDENLDPKKHKKVAMFCTGGIRCEKSTALLKAKGFDEVYHLKGGILKYLEEVPKEKSMWQGECFVFDSRVAVNHDLEKGNYDQCFACRMPITEDDKKRPEYVKGISCHHCYDKVTEKQKARFAEREKQSQLAAEKGFSHVGDEAKKLAQLNKQKKQQAKEAARKKAQQ.

Residues 127 to 221 (SDPETVLIDT…YLEEVPKEKS (95 aa)) enclose the Rhodanese domain. Cysteine 181 serves as the catalytic Cysteine persulfide intermediate. The interval 308–332 (AKKLAQLNKQKKQQAKEAARKKAQQ) is disordered. Positions 321-332 (QAKEAARKKAQQ) are enriched in basic and acidic residues.

It belongs to the TrhO family.

The catalysed reaction is uridine(34) in tRNA + AH2 + O2 = 5-hydroxyuridine(34) in tRNA + A + H2O. Functionally, catalyzes oxygen-dependent 5-hydroxyuridine (ho5U) modification at position 34 in tRNAs. The polypeptide is tRNA uridine(34) hydroxylase (Francisella tularensis subsp. tularensis (strain FSC 198)).